We begin with the raw amino-acid sequence, 565 residues long: MRSDTIKTGFEKAPHRSLLKATGSIVSNNDFKKPFIGICNSYNELIPGHSHLQELGRIAKEEVRKAGGVPFEFNTIGVCDGIAMGHIGMRYSLASRELIADSVETVAQAHCLDGLVCIPNCDKITPGMMMAALRINIPVIFVSGGPMKAGHTPSGQTVDLISVFEAVGQFSAGKIGNEELESIEESACPGCGSCSGMFTANSMNCLSEALGFALPGNGTILAIDPRRNELVREASRRIIDLVKKDIKPRDILSRNALLNAFALDFAMGGSTNTILHTLAIANEAELDFNFSELNALSAKTPYICKVSPATMAVHIEDVDRAGGVSAILHELSRIDGLLDLSTLTVTGKTLGENIADAEILDYTVIRSIDEPYSATGGLAVLFGNLAPQGAVVKTGAVAPEMMKHTGPAKIYDCQDDAIKGIMGDDVKAGDVVVIRYEGPKGGPGMPEMLSPTSAIMGRGLGESVALITDGRFSGGSRGACIGHISPEAAERGPIAALHNGDLITIDIPSRSISVNLTEETINERLAALKPFEPKIKKGYLARYAQMVTSANTGAILKNPVSCEPK.

Aspartate 80 is a binding site for Mg(2+). Cysteine 121 is a [2Fe-2S] cluster binding site. Mg(2+) is bound by residues aspartate 122 and lysine 123. At lysine 123 the chain carries N6-carboxylysine. [2Fe-2S] cluster is bound at residue cysteine 194. Residue glutamate 447 coordinates Mg(2+). Residue serine 473 is the Proton acceptor of the active site.

Belongs to the IlvD/Edd family. As to quaternary structure, homodimer. It depends on [2Fe-2S] cluster as a cofactor. Mg(2+) is required as a cofactor.

The enzyme catalyses (2R)-2,3-dihydroxy-3-methylbutanoate = 3-methyl-2-oxobutanoate + H2O. The catalysed reaction is (2R,3R)-2,3-dihydroxy-3-methylpentanoate = (S)-3-methyl-2-oxopentanoate + H2O. Its pathway is amino-acid biosynthesis; L-isoleucine biosynthesis; L-isoleucine from 2-oxobutanoate: step 3/4. The protein operates within amino-acid biosynthesis; L-valine biosynthesis; L-valine from pyruvate: step 3/4. Its function is as follows. Functions in the biosynthesis of branched-chain amino acids. Catalyzes the dehydration of (2R,3R)-2,3-dihydroxy-3-methylpentanoate (2,3-dihydroxy-3-methylvalerate) into 2-oxo-3-methylpentanoate (2-oxo-3-methylvalerate) and of (2R)-2,3-dihydroxy-3-methylbutanoate (2,3-dihydroxyisovalerate) into 2-oxo-3-methylbutanoate (2-oxoisovalerate), the penultimate precursor to L-isoleucine and L-valine, respectively. This Pelodictyon phaeoclathratiforme (strain DSM 5477 / BU-1) protein is Dihydroxy-acid dehydratase.